The sequence spans 94 residues: Exodeoxyribonuclease 7 small subunit (94 aa).

The interval 1 to 21 is disordered; sequence MPRAPNDAPSASATPSATPAS.

It belongs to the XseB family. In terms of assembly, heterooligomer composed of large and small subunits.

It localises to the cytoplasm. The catalysed reaction is Exonucleolytic cleavage in either 5'- to 3'- or 3'- to 5'-direction to yield nucleoside 5'-phosphates.. In terms of biological role, bidirectionally degrades single-stranded DNA into large acid-insoluble oligonucleotides, which are then degraded further into small acid-soluble oligonucleotides. The polypeptide is Exodeoxyribonuclease 7 small subunit (Ralstonia pickettii (strain 12J)).